A 363-amino-acid polypeptide reads, in one-letter code: Apelin receptor B (363 aa).

Residues 1-38 (MESEGFSATTEQYEYYDYANETGLQPCDETDWDFSYSL) lie on the Extracellular side of the membrane. Asparagine 20 is a glycosylation site (N-linked (GlcNAc...) asparagine). Cystine bridges form between cysteine 27/cysteine 287 and cysteine 109/cysteine 186. Residues 39–59 (LPVFYMIVFVLGLSGNGVVIF) traverse the membrane as a helical segment. Residues 60–77 (TVWKAKPKRRSADTYIGN) are Cytoplasmic-facing. The helical transmembrane segment at 78–98 (LALADLAFVVTLPLWATYTAL) threads the bilayer. The Extracellular segment spans residues 99–111 (GFHWPFGSALCKL). The chain crosses the membrane as a helical span at residues 112 to 132 (SSYLVLLNMFASVFCLTCLSF). Residues 133–152 (DRYLAIVHSLSSAKLRSRSS) lie on the Cytoplasmic side of the membrane. Residues 153–173 (ILVSLAVIWLFSGLLALPSLI) form a helical membrane-spanning segment. Residues 174–200 (LRDTRVEGNNTICDLDFSGVSSKENEN) are Extracellular-facing. The N-linked (GlcNAc...) asparagine glycan is linked to asparagine 182. Residues 201–221 (FWIGGLSILTTVPGFLLPLLL) form a helical membrane-spanning segment. Topologically, residues 222–249 (MTIFYCFIGGKVTMHFQNLKKEEQKKKR) are cytoplasmic. The helical transmembrane segment at 250–270 (LLKIIITLVVVFAICWLPFHI) threads the bilayer. The Extracellular segment spans residues 271–297 (LKTIHFLDLMGFLELSCSAQNIIVSLH). Residues 298–318 (PYATCLAYVNSCLNPFLYAFF) form a helical membrane-spanning segment. The Cytoplasmic segment spans residues 319 to 363 (DLRFRSQCFFFFGFKKVLQGHLSNTSSSLSAQTQKSEIHSLATKV).

Belongs to the G-protein coupled receptor 1 family. As to expression, expressed in all blood vessels including the posterior cardinal vein, intersomitic veins and the vitelline vein network.

It localises to the cell membrane. Functionally, g protein-coupled receptor for peptide hormones apelin (apln) and apelin receptor early endogenous ligand (apela), that plays a role in the regulation of normal cardiovascular function and fluid homeostasis. When acting as apelin receptor, activates both G(i) protein pathway that inhibits adenylate cyclase activity, and the beta-arrestin pathway that promotes internalization of the receptor. Also functions as mechanoreceptor that is activated by pathological stimuli in a G-protein-independent fashion to induce beta-arrestin signaling, hence eliciting cardiac hypertrophy. However, the presence of apelin ligand blunts cardiac hypertrophic induction from APLNR/APJ on response to pathological stimuli. Plays a key role in early development such as gastrulation, blood vessels formation and heart morphogenesis by acting as a receptor for apela hormone, promoting endoderm and mesendoderm cell migration and regulating the migration of cells fated to become myocardial progenitors, respectively. Promotes angioblast migration toward the embryonic midline, i.e. the position of the future vessel formation, during vasculogenesis. May promote sinus venosus (SV)-derived endothelial cells migration into the developing heart to promote coronary blood vessel development. Required for cardiovascular development, particularly for intersomitic vein angiogenesis by acting as a receptor for apln hormone. Also plays a role in various processes in adults such as regulation of blood vessel formation, blood pressure, heart contractility, and heart failure. Acts upstream of the i/o type of G-alpha proteins in the differentiation of endothelium, erythroid cells, myeloid cells and cardiomyocytes. This Xenopus laevis (African clawed frog) protein is Apelin receptor B (aplnr-b).